The following is a 1026-amino-acid chain: Multidrug resistance protein MdtC (1026 aa).

The next 11 helical transmembrane spans lie at 15–35 (ILIA…LPVA), 333–353 (EVEE…FLFL), 360–380 (LIPA…MYLC), 387–407 (LSLM…IVVL), 431–451 (VGFT…PLLL), 463–483 (FAVT…TLTP), 528–548 (LVGV…IAIP), 853–873 (LILI…LYES), 897–917 (LFNA…IGIV), 953–973 (PIMM…LSGG), and 984–1004 (ITIV…TPVV).

It belongs to the resistance-nodulation-cell division (RND) (TC 2.A.6) family. MdtC subfamily. As to quaternary structure, part of a tripartite efflux system composed of MdtA, MdtB and MdtC. MdtC forms a heteromultimer with MdtB.

The protein localises to the cell inner membrane. The chain is Multidrug resistance protein MdtC from Salmonella paratyphi A (strain AKU_12601).